The primary structure comprises 393 residues: HORMA domain-containing protein 1 (393 aa).

The region spanning 24–226 (QQSLVLVKRL…TPFHTFKVKV (203 aa)) is the HORMA domain. Residues 322-393 (SKTSELDVSE…RKFSEPKERI (72 aa)) form a disordered region. Residues 352–361 (KSKENRKRTQ) are compositionally biased toward basic and acidic residues. Position 375 is a phosphoserine (serine 375). Residues 382 to 385 (KRRK) carry the Nuclear localization signal motif.

In terms of assembly, interacts with HORMAD2. Interacts with IHO1. Post-translationally, phosphorylated at Ser-376 in a SPO11-dependent manner.

Its subcellular location is the nucleus. The protein resides in the chromosome. Its function is as follows. Plays a key role in meiotic progression. Regulates 3 different functions during meiosis: ensures that sufficient numbers of processed DNA double-strand breaks (DSBs) are available for successful homology search by increasing the steady-state numbers of single-stranded DSB ends. Promotes synaptonemal-complex formation independently of its role in homology search. Plays a key role in the male mid-pachytene checkpoint and the female meiotic prophase checkpoint: required for efficient build-up of ATR activity on unsynapsed chromosome regions, a process believed to form the basis of meiotic silencing of unsynapsed chromatin (MSUC) and meiotic prophase quality control in both sexes. This chain is HORMA domain-containing protein 1 (HORMAD1), found in Bos taurus (Bovine).